The sequence spans 684 residues: Sec1 family domain-containing protein 2 (684 aa).

The protein belongs to the STXBP/unc-18/SEC1 family.

Its function is as follows. May be involved in protein transport. This chain is Sec1 family domain-containing protein 2 (Scfd2), found in Mus musculus (Mouse).